The chain runs to 295 residues: Small ribosomal subunit biogenesis GTPase RsgA (295 aa).

Positions 68–228 constitute a CP-type G domain; it reads KNLLTKPHVA…VVDTPGFANL (161 aa). GTP is bound by residues 117–120 and 170–178; these read NKMD and GLSGVGKSS. Zn(2+) contacts are provided by C250, C255, H257, and C263.

It belongs to the TRAFAC class YlqF/YawG GTPase family. RsgA subfamily. As to quaternary structure, monomer. Associates with 30S ribosomal subunit, binds 16S rRNA. Zn(2+) is required as a cofactor.

It localises to the cytoplasm. In terms of biological role, one of several proteins that assist in the late maturation steps of the functional core of the 30S ribosomal subunit. Helps release RbfA from mature subunits. May play a role in the assembly of ribosomal proteins into the subunit. Circularly permuted GTPase that catalyzes slow GTP hydrolysis, GTPase activity is stimulated by the 30S ribosomal subunit. The protein is Small ribosomal subunit biogenesis GTPase RsgA of Thermotoga petrophila (strain ATCC BAA-488 / DSM 13995 / JCM 10881 / RKU-1).